Consider the following 419-residue polypeptide: Zinc finger protein Pegasus (419 aa).

K5 participates in a covalent cross-link: Glycyl lysine isopeptide (Lys-Gly) (interchain with G-Cter in SUMO2). 3 C2H2-type zinc fingers span residues 82–104 (LKCR…IRIH), 110–132 (HRCH…MRSH), and 138–161 (YKCE…RRKH). K185 participates in a covalent cross-link: Glycyl lysine isopeptide (Lys-Gly) (interchain with G-Cter in SUMO2). Positions 223–236 (QTDSYESMAKTTPT) are enriched in polar residues. Disordered stretches follow at residues 223 to 245 (QTDS…DPQE) and 288 to 356 (MQQP…PTLP). Positions 289-311 (QQPSAQAVVSAVSASLPQSSSPA) are enriched in low complexity. The span at 332-349 (SEPSAHTSTPSMGNSQPS) shows a compositional bias: polar residues. C2H2-type zinc fingers lie at residues 364 to 386 (HHCQ…MGCH) and 392 to 416 (FQCN…RGQH).

Belongs to the Ikaros C2H2-type zinc-finger protein family. As to quaternary structure, self-associates. Interacts with other family members; IKZF1, IKZF2, IKZF3 and IKZF4.

It localises to the nucleus. Its function is as follows. Transcriptional repressor that binds the core 5'GNNTGTNG-3' DNA consensus sequence. Involved in megakaryocyte differentiation. This is Zinc finger protein Pegasus (IKZF5) from Bos taurus (Bovine).